A 34-amino-acid chain; its full sequence is Aspartate aminotransferase 2 (34 aa).

The protein belongs to the class-I pyridoxal-phosphate-dependent aminotransferase family. Homodimer. Pyridoxal 5'-phosphate serves as cofactor.

It carries out the reaction L-aspartate + 2-oxoglutarate = oxaloacetate + L-glutamate. Its function is as follows. Important for the metabolism of amino acids and Krebs-cycle related organic acids. In plants, it is involved in nitrogen metabolism and in aspects of carbon and energy metabolism. This Pseudotsuga menziesii (Douglas-fir) protein is Aspartate aminotransferase 2.